A 152-amino-acid polypeptide reads, in one-letter code: UPF0178 protein YaiI (152 aa).

This sequence belongs to the UPF0178 family.

This chain is UPF0178 protein YaiI, found in Shigella flexneri.